The sequence spans 366 residues: MAAANRTLMVMAGGTGGHVYPALAVAETLRERGWSVFWLGTRAGLEARVVPAAGIDMVWVSMGGVRGKGLVKKLLLPAMLLVAFAQSLGAILRRRPDVVLGMGGYTAFPGGMMASLLNRPLVVHEQNSVGGLTNRLLACLADRVLTAFPAVFTHAHDKPIPCRRVSAEWVGNPVRGDITAAPAGERAARSGPLRLLVVGGSLGASALNELVPRALALLPEAQRPRVVHQSGRRHVDALRAGYAAAAVDAEVRDYIDDMAAAYRDCDFAICRAGAMTVAELACAGVPALLVPFPFAVDDHQTGNAAFLAEAGAAWLVQQKDLSAEALAELIAGIDRNRLAAMSEQAVRLAKPDATGRVADICEALAK.

Residues 15 to 17 (TGG), N127, R175, S201, I255, and Q300 each bind UDP-N-acetyl-alpha-D-glucosamine.

Belongs to the glycosyltransferase 28 family. MurG subfamily.

The protein resides in the cell inner membrane. The catalysed reaction is di-trans,octa-cis-undecaprenyl diphospho-N-acetyl-alpha-D-muramoyl-L-alanyl-D-glutamyl-meso-2,6-diaminopimeloyl-D-alanyl-D-alanine + UDP-N-acetyl-alpha-D-glucosamine = di-trans,octa-cis-undecaprenyl diphospho-[N-acetyl-alpha-D-glucosaminyl-(1-&gt;4)]-N-acetyl-alpha-D-muramoyl-L-alanyl-D-glutamyl-meso-2,6-diaminopimeloyl-D-alanyl-D-alanine + UDP + H(+). It participates in cell wall biogenesis; peptidoglycan biosynthesis. Its function is as follows. Cell wall formation. Catalyzes the transfer of a GlcNAc subunit on undecaprenyl-pyrophosphoryl-MurNAc-pentapeptide (lipid intermediate I) to form undecaprenyl-pyrophosphoryl-MurNAc-(pentapeptide)GlcNAc (lipid intermediate II). The chain is UDP-N-acetylglucosamine--N-acetylmuramyl-(pentapeptide) pyrophosphoryl-undecaprenol N-acetylglucosamine transferase from Thiobacillus denitrificans (strain ATCC 25259 / T1).